The sequence spans 363 residues: G kinase-anchoring protein 1-B (363 aa).

2 disordered regions span residues 17–79 and 147–182; these read ALLK…RNLA and VNGDGVNGVPQSKKVNKKDKRKNNQGKDKPLTVPLK. Residues 50–79 adopt a coiled-coil conformation; that stretch reads KTNVNEKKKEKRRKKKEQQQSEANELRNLA. A compositionally biased stretch (basic residues) spans 160–170; it reads KVNKKDKRKNN. Coiled-coil stretches lie at residues 249–298 and 328–348; these read DGKT…QEGE and AALEQERSKVKVLQAEQVRYQ.

The protein belongs to the GKAP1 family.

The protein resides in the golgi apparatus. May play a role in the regulation of insulin-dependent IRS1 tyrosine phosphorylation in adipocytes. The sequence is that of G kinase-anchoring protein 1-B (gkap1-b) from Xenopus laevis (African clawed frog).